The chain runs to 246 residues: Aliphatic sulfonates import ATP-binding protein SsuB 2 (246 aa).

The 215-residue stretch at 4 to 218 (VTVRGLRRAF…RRDPRFEQAR (215 aa)) folds into the ABC transporter domain. Position 36-43 (36-43 (GRSGGGKT)) interacts with ATP.

Belongs to the ABC transporter superfamily. Aliphatic sulfonates importer (TC 3.A.1.17.2) family. The complex is composed of two ATP-binding proteins (SsuB), two transmembrane proteins (SsuC) and a solute-binding protein (SsuA).

It localises to the cell membrane. The enzyme catalyses ATP + H2O + aliphatic sulfonate-[sulfonate-binding protein]Side 1 = ADP + phosphate + aliphatic sulfonateSide 2 + [sulfonate-binding protein]Side 1.. Functionally, part of the ABC transporter complex SsuABC involved in aliphatic sulfonates import. Responsible for energy coupling to the transport system. This Frankia alni (strain DSM 45986 / CECT 9034 / ACN14a) protein is Aliphatic sulfonates import ATP-binding protein SsuB 2.